A 1031-amino-acid chain; its full sequence is Putative protein TIC 214 N-terminal part (1031 aa).

A run of 6 helical transmembrane segments spans residues 11-31, 68-88, 92-112, 127-147, 166-186, and 212-232; these read ILWA…LFGL, TLGQ…IMLL, AITL…KDLS, GIIQ…ILLP, SFFV…LINL, and TFSI…PVPF.

The protein belongs to the TIC214 family. In terms of assembly, part of the Tic complex.

The protein localises to the plastid. It localises to the chloroplast inner membrane. Involved in protein precursor import into chloroplasts. May be part of an intermediate translocation complex acting as a protein-conducting channel at the inner envelope. The chain is Putative protein TIC 214 N-terminal part from Anthoceros angustus (Hornwort).